The chain runs to 439 residues: Thymidine phosphorylase (439 aa).

The protein belongs to the thymidine/pyrimidine-nucleoside phosphorylase family. Homodimer.

It carries out the reaction thymidine + phosphate = 2-deoxy-alpha-D-ribose 1-phosphate + thymine. It functions in the pathway pyrimidine metabolism; dTMP biosynthesis via salvage pathway; dTMP from thymine: step 1/2. In terms of biological role, the enzymes which catalyze the reversible phosphorolysis of pyrimidine nucleosides are involved in the degradation of these compounds and in their utilization as carbon and energy sources, or in the rescue of pyrimidine bases for nucleotide synthesis. The chain is Thymidine phosphorylase from Mesorhizobium japonicum (strain LMG 29417 / CECT 9101 / MAFF 303099) (Mesorhizobium loti (strain MAFF 303099)).